The following is a 1434-amino-acid chain: Probable ATP-dependent RNA helicase spindle-E (1434 aa).

The interval 66–86 (VGGPSNTKRTKTLDELESDDD) is disordered. The Helicase ATP-binding domain occupies 127-294 (MKAIKENPVV…FASCKSMPPV (168 aa)). 140–147 (GETGCGKT) lines the ATP pocket. A DEAH box motif is present at residues 240–243 (DEVH). Positions 354–526 (QSEQSYEEAK…SSVLKAKELD (173 aa)) constitute a Helicase C-terminal domain. Positions 938–1001 (ASAITKGLQL…RLMRHELRRD (64 aa)) constitute a Tudor domain.

Belongs to the DEAD box helicase family. DEAH subfamily.

It is found in the cytoplasm. The enzyme catalyses ATP + H2O = ADP + phosphate + H(+). Probable ATP-binding RNA helicase which plays a central role during spermatogenesis and oogenesis by repressing transposable elements and preventing their mobilization, which is essential for the germline integrity. Acts via the piRNA metabolic process, which mediates the repression of transposable elements during meiosis by forming complexes composed of piRNAs and Piwi and govern the methylation and subsequent repression of transposons. Involved in the repression of LTR retrotransposon copia. Also involved in telomere regulation by repressing specialized telomeric retroelements HeT-A, TAHRE, and TART; Drosophila telomeres being maintained by transposition of specialized telomeric retroelements. Involved in telomeric trans-silencing, a repression mechanism by which a transposon or a transgene inserted in subtelomeric heterochromatin has the capacity to repress in trans in the female germline, a homologous transposon, or transgene located in euchromatin. Involved in the repression of testis-expressed Stellate genes by the homologous Su(Ste) repeats. Required for anteroposterior and dorsoventral axis formation during oogenesis. This chain is Probable ATP-dependent RNA helicase spindle-E (spn-E), found in Drosophila grimshawi (Hawaiian fruit fly).